Consider the following 239-residue polypeptide: ATP-dependent dethiobiotin synthetase BioD (239 aa).

Position 15-20 (Glu15–Phe20) interacts with ATP. Thr19 lines the Mg(2+) pocket. Lys40 is an active-site residue. ATP is bound by residues Asp57, Glu118 to Gly121, Asn178 to His179, and Ala211 to Leu213. Residues Asp57 and Glu118 each contribute to the Mg(2+) site.

It belongs to the dethiobiotin synthetase family. As to quaternary structure, homodimer. It depends on Mg(2+) as a cofactor.

It is found in the cytoplasm. It catalyses the reaction (7R,8S)-7,8-diammoniononanoate + CO2 + ATP = (4R,5S)-dethiobiotin + ADP + phosphate + 3 H(+). Its pathway is cofactor biosynthesis; biotin biosynthesis; biotin from 7,8-diaminononanoate: step 1/2. Functionally, catalyzes a mechanistically unusual reaction, the ATP-dependent insertion of CO2 between the N7 and N8 nitrogen atoms of 7,8-diaminopelargonic acid (DAPA, also called 7,8-diammoniononanoate) to form a ureido ring. The sequence is that of ATP-dependent dethiobiotin synthetase BioD from Burkholderia ambifaria (strain MC40-6).